The chain runs to 581 residues: Aspartate--tRNA ligase (581 aa).

Glu170 contributes to the L-aspartate binding site. Residues Gln194–Lys197 are aspartate. Arg216 contacts L-aspartate. Residues Arg216–Glu218 and Gln225 contribute to the ATP site. Residue His440 participates in L-aspartate binding. Residue Glu469 participates in ATP binding. Arg476 is an L-aspartate binding site. Gly521–Arg524 contributes to the ATP binding site.

This sequence belongs to the class-II aminoacyl-tRNA synthetase family. Type 1 subfamily. Homodimer.

It localises to the cytoplasm. It carries out the reaction tRNA(Asp) + L-aspartate + ATP = L-aspartyl-tRNA(Asp) + AMP + diphosphate. Functionally, catalyzes the attachment of L-aspartate to tRNA(Asp) in a two-step reaction: L-aspartate is first activated by ATP to form Asp-AMP and then transferred to the acceptor end of tRNA(Asp). The sequence is that of Aspartate--tRNA ligase from Thermosipho africanus (strain TCF52B).